Reading from the N-terminus, the 328-residue chain is Phosphoserine phosphatase (328 aa).

Aspartate 113 functions as the Nucleophile in the catalytic mechanism. Mg(2+) is bound by residues aspartate 113 and aspartate 115. The active-site Proton donor is the aspartate 115. Substrate is bound by residues glutamate 122, arginine 158, 201–202 (SG), and lysine 246. Residue aspartate 269 participates in Mg(2+) binding. Asparagine 272 contributes to the substrate binding site.

This sequence belongs to the HAD-like hydrolase superfamily. SerB family. Requires Mg(2+) as cofactor.

It catalyses the reaction O-phospho-L-serine + H2O = L-serine + phosphate. The enzyme catalyses O-phospho-D-serine + H2O = D-serine + phosphate. The protein operates within amino-acid biosynthesis; L-serine biosynthesis; L-serine from 3-phospho-D-glycerate: step 3/3. The polypeptide is Phosphoserine phosphatase (Vibrio cholerae serotype O1 (strain ATCC 39315 / El Tor Inaba N16961)).